A 708-amino-acid chain; its full sequence is Retrotransposon-derived protein PEG10 (708 aa).

A coiled-coil region spans residues 1 to 50 (MTERRRDELSEEINNLREKVMKQSEENNNLQSQVQKLTEENTTLREQVEP). A disordered region spans residues 21–74 (MKQSEENNNLQSQVQKLTEENTTLREQVEPTPEDEDDDIELRGAAAAAAPPPPI). Residues 26 to 36 (ENNNLQSQVQK) are compositionally biased toward polar residues. The segment covering 37–48 (LTEENTTLREQV) has biased composition (basic and acidic residues). The tract at residues 76-275 (EECPEDLPEK…HQVDPTEPVG (200 aa)) is necessary for interaction with ACVRL1. The segment at 293–310 (NLCLYCGTGGHYADNCPA) adopts a CCHC-type zinc-finger fold. A disordered region spans residues 310-344 (AKASKSSPAGKLPGPAVEGPSATGPEIIRSPQDDA). Glycyl lysine isopeptide (Lys-Gly) (interchain with G-Cter in ubiquitin) cross-links involve residues Lys311 and Lys314. Phosphoserine is present on residues Ser316 and Leu321. 3 positions are modified to omega-N-methylarginine: Arg507, Arg598, and Arg611. Positions 683–708 (PVPQYPPPQPPPPPPPPPPPPSYSTL) are disordered.

As to quaternary structure, homooligomer; homooligomerizes into virion-like capsids. Interacts with ACVRL1. Interacts with SIAH1 and SIAH2. Post-translationally, undergoes proteolytic cleavage. Expressed in the cytotrophoblast layer but not in the overlying syncytiotrophoblast of the placenta. Expressed in prostate and breast carcinomas but not in normal breast and prostate epithelial cells. Expressed in the Hep-G2 cell line (at protein level). Expressed in brain, liver, spleen, kidney, thymus, lung, ovary, testis, reactive lymph node, skeletal muscle, adipose tissue and placenta. Expressed in pancreatic and hepatocellular carcinomas (HCC).

Its subcellular location is the extracellular vesicle membrane. It localises to the cytoplasm. It is found in the nucleus. Functionally, retrotransposon-derived protein that binds its own mRNA and self-assembles into virion-like capsids. Forms virion-like extracellular vesicles that encapsulate their own mRNA and are released from cells, enabling intercellular transfer of PEG10 mRNA. Binds its own mRNA in the 5'-UTR region, in the region near the boundary between the nucleocapsid (NC) and protease (PRO) coding sequences and in the beginning of the 3'-UTR region. Involved in placenta formation: required for trophoblast stem cells differentiation. Involved at the immediate early stage of adipocyte differentiation. Overexpressed in many cancers and enhances tumor progression: promotes cell proliferation by driving cell cycle progression from G0/G1. Enhances cancer progression by inhibiting the TGF-beta signaling, possibly via interaction with the TGF-beta receptor ACVRL1. May bind to the 5'-GCCTGTCTTT-3' DNA sequence of the MB1 domain in the myelin basic protein (MBP) promoter; additional evidences are however required to confirm this result. The polypeptide is Retrotransposon-derived protein PEG10 (Homo sapiens (Human)).